Here is a 410-residue protein sequence, read N- to C-terminus: MIREKFERIKPHLNIGTIGHVDHGKTTLTAAITMALAVKGYTKAKNYMDIDSAPEEKARGITINTAHVEYETDVRHYAHVDCPGHADYVKNMITGAAQMDGAILVVSGADGPMPQTKEHILLAKQVGVPAIVVFLNKADQVDDDELLELVELEIQETLTTYEYPGEEIPIITGSAITALESLTAKYVLRIGNKWVQKIYDLMETVDEYIPTPKRDTEKPFLMAIENVVSITGRGTVATGRVERGMIEVGQTVELVGLKNTKEAIITGLEMFHKTLEKSVAGDNVGILLRRIQKEEIQRGMVLAKPSSILPHQHFKAQVYILKKEEGGRHTSFFAGYRPQFYVRTTDVTGHIKTFQGKIDNTQIQMVMPGDRIQMEVELIRPIAIETRMRFAIREGGKTVGAGVVTTIVQA.

Positions K10–K213 constitute a tr-type G domain. The segment at G19–T26 is G1. Position 19-26 (G19–T26) interacts with GTP. T26 serves as a coordination point for Mg(2+). The interval G60 to N64 is G2. Residues D81–G84 are G3. GTP contacts are provided by residues D81–H85 and N136–D139. Residues N136–D139 are G4. The segment at S174–I176 is G5.

Belongs to the TRAFAC class translation factor GTPase superfamily. Classic translation factor GTPase family. EF-Tu/EF-1A subfamily.

It is found in the plastid. The protein resides in the chloroplast. The catalysed reaction is GTP + H2O = GDP + phosphate + H(+). In terms of biological role, GTP hydrolase that promotes the GTP-dependent binding of aminoacyl-tRNA to the A-site of ribosomes during protein biosynthesis. In Codium fragile (Dead man's fingers), this protein is Elongation factor Tu, chloroplastic (tufA).